We begin with the raw amino-acid sequence, 155 residues long: Small ribosomal subunit protein bS6 (155 aa).

A disordered region spans residues glutamate 94–valine 155.

This sequence belongs to the bacterial ribosomal protein bS6 family.

Binds together with bS18 to 16S ribosomal RNA. The chain is Small ribosomal subunit protein bS6 from Rhizobium johnstonii (strain DSM 114642 / LMG 32736 / 3841) (Rhizobium leguminosarum bv. viciae).